The sequence spans 121 residues: Cell division protein FtsL (121 aa).

At 1–34 the chain is on the cytoplasmic side; that stretch reads MISRVTEALSKVKGSMGSHERHALPGVIGDDLLR. The helical transmembrane segment at 35–57 threads the bilayer; sequence FGKLPLCLFICIILTAVTVVTTA. The Periplasmic segment spans residues 58-121; the sequence is HHTRLLTAQR…PSQENIVVQK (64 aa).

Belongs to the FtsL family. In terms of assembly, part of a complex composed of FtsB, FtsL and FtsQ.

The protein resides in the cell inner membrane. Its function is as follows. Essential cell division protein. May link together the upstream cell division proteins, which are predominantly cytoplasmic, with the downstream cell division proteins, which are predominantly periplasmic. This is Cell division protein FtsL from Shigella dysenteriae serotype 1 (strain Sd197).